The sequence spans 236 residues: Three prime repair exonuclease 2 (236 aa).

Positions 14 and 16 each coordinate Mg(2+). Residues 16-17 (EA) and Tyr122 contribute to the substrate site. His188 serves as the catalytic Proton donor/acceptor. Position 193 (Asp193) interacts with Mg(2+). Position 193 (Asp193) interacts with substrate.

This sequence belongs to the exonuclease superfamily. TREX family. Homodimer. The cofactor is Mg(2+).

It is found in the nucleus. It catalyses the reaction Exonucleolytic cleavage in the 3'- to 5'-direction to yield nucleoside 5'-phosphates.. Functionally, exonuclease with a preference for double-stranded DNA with mismatched 3' termini. May play a role in DNA repair. The chain is Three prime repair exonuclease 2 (Trex2) from Mus musculus (Mouse).